The primary structure comprises 132 residues: uncharacterized protein (132 aa).

A signal peptide spans 1–18; sequence MRKIISMLFIPLFIFAMA.

This is an uncharacterized protein from Aquifex aeolicus (strain VF5).